Consider the following 59-residue polypeptide: Large ribosomal subunit protein uL30 (59 aa).

This sequence belongs to the universal ribosomal protein uL30 family. In terms of assembly, part of the 50S ribosomal subunit.

The chain is Large ribosomal subunit protein uL30 from Escherichia coli (strain UTI89 / UPEC).